The sequence spans 149 residues: MDLPACRDIRRTGHWSEADDRVTLSYDDRFLRRKRLITVQDKAFLVDLAHTTSLEHGDAFQLEDGRLIECIAADEDLLEVTGPDLTRLAWHIGNRHTPCQIEENRLLIQRDHVIQDMLSQIGATLREVVEPFTPEGGAYGHGRTHGHAH.

The protein belongs to the UreE family.

The protein resides in the cytoplasm. Its function is as follows. Involved in urease metallocenter assembly. Binds nickel. Probably functions as a nickel donor during metallocenter assembly. The sequence is that of Urease accessory protein UreE from Ruegeria pomeroyi (strain ATCC 700808 / DSM 15171 / DSS-3) (Silicibacter pomeroyi).